We begin with the raw amino-acid sequence, 259 residues long: Probable kinetochore protein spc25 (259 aa).

Positions 1-20 (MSRKSVMSSTFEPSLSTSRQ) are enriched in polar residues. A disordered region spans residues 1–25 (MSRKSVMSSTFEPSLSTSRQPLGPS). Residues 59 to 162 (RKRVLEERNQ…HAAQLEAQAR (104 aa)) adopt a coiled-coil conformation.

This sequence belongs to the SPC25 family. In terms of assembly, component of the NDC80 complex, which consists of kpr-1/ndc80, kpr-2/nuf2, kpr-3/spc24 and kpr-4/spc25.

It localises to the nucleus. Its subcellular location is the chromosome. The protein resides in the centromere. It is found in the kinetochore. In terms of biological role, acts as a component of the essential kinetochore-associated NDC80 complex, which is required for chromosome segregation and spindle checkpoint activity. The protein is Probable kinetochore protein spc25 (kpr-4) of Neurospora crassa (strain ATCC 24698 / 74-OR23-1A / CBS 708.71 / DSM 1257 / FGSC 987).